Here is a 415-residue protein sequence, read N- to C-terminus: Multidrug resistance protein MdtA (415 aa).

Positions 1–21 (MKGSYKSRWVIVIVVVIAAIA) are cleaved as a signal peptide. Over residues 31 to 47 (DSQSAAPGATKQAQQSP) the composition is skewed to polar residues. Disordered stretches follow at residues 31 to 60 (DSQS…GPLA) and 392 to 415 (EAQS…GARS). The segment covering 399 to 415 (SEEKATSREYAKKGARS) has biased composition (basic and acidic residues).

It belongs to the membrane fusion protein (MFP) (TC 8.A.1) family. In terms of assembly, part of a tripartite efflux system composed of MdtA, MdtB and MdtC.

Its subcellular location is the cell inner membrane. Functionally, the MdtABC tripartite complex confers resistance against novobiocin and deoxycholate. The protein is Multidrug resistance protein MdtA of Escherichia coli O139:H28 (strain E24377A / ETEC).